The primary structure comprises 322 residues: Malate dehydrogenase 1 (322 aa).

NAD(+)-binding positions include 10-15 (GSGQIG) and Asp34. Substrate-binding residues include Arg83 and Arg89. Residues Asn96 and 119-121 (ITN) contribute to the NAD(+) site. Substrate-binding residues include Asn121 and Arg152. The active-site Proton acceptor is the His176.

The protein belongs to the LDH/MDH superfamily. MDH type 3 family.

It catalyses the reaction (S)-malate + NAD(+) = oxaloacetate + NADH + H(+). Its function is as follows. Catalyzes the reversible oxidation of malate to oxaloacetate. This chain is Malate dehydrogenase 1, found in Rhodopseudomonas palustris (strain BisB18).